A 360-amino-acid chain; its full sequence is Inward rectifier potassium channel 13 (360 aa).

At 1 to 50 the chain is on the cytoplasmic side; it reads MDSRNCKVNAPLLSQRYRRMVTKDGHSTLQMDGAQRGLVYLRDAWGILMD. A helical transmembrane segment spans residues 51-77; it reads MRWRWMMLVFSASFVVHWLVFAVLWYA. At 78 to 105 the chain is on the extracellular side; that stretch reads VAEMNGDLEIDHDVPPENHTICVKHITS. Residues 106 to 122 constitute an intramembrane region (helical; Pore-forming); it reads FTAAFSFSLETQLTIGY. Residues 119–124 carry the Selectivity filter motif; the sequence is TIGYGT. The Extracellular segment spans residues 123–131; that stretch reads GTMFPSGDC. A helical membrane pass occupies residues 132-157; sequence PSAIALLAIQMLLGLMLEAFITGAFV. Residues 158–360 lie on the Cytoplasmic side of the membrane; it reads AKIARPKNRA…FQIAETGLTE (203 aa). Phosphoserine; by PKC is present on S201. S287 is subject to Phosphoserine; by PKA.

Belongs to the inward rectifier-type potassium channel (TC 1.A.2.1) family. KCNJ13 subfamily. As to quaternary structure, homotetramer. Interacts with RAB28; the interaction may facilitate cone outer segments phagocytosis. Post-translationally, phosphorylation at Ser-201 by PKC strongly inhibits ionic currents, while phosphorylation at Ser-287 by PKA increases them.

The protein localises to the membrane. The protein resides in the cell membrane. It carries out the reaction K(+)(in) = K(+)(out). Its activity is regulated as follows. Inhibited by Ba(2+) and Cs(+), although sensitivity to those inhibitors is much lower than in other Kir channels. In terms of biological role, inward rectifier potassium channels are characterized by a greater tendency to allow potassium to flow into the cell rather than out of it. Their voltage dependence is regulated by the concentration of extracellular potassium; as external potassium is raised, the voltage range of the channel opening shifts to more positive voltages. The inward rectification is mainly due to the blockage of outward current by internal magnesium. KCNJ13 has a very low single channel conductance, low sensitivity to block by external barium and cesium, and no dependence of its inward rectification properties on the internal blocking particle magnesium. This Rattus norvegicus (Rat) protein is Inward rectifier potassium channel 13 (Kcnj13).